We begin with the raw amino-acid sequence, 295 residues long: CRISPR system Cmr endoribonuclease Cmr4 (295 aa).

It belongs to the CRISPR system Cmr4 family. In terms of assembly, forms oligomers in isolation. Part of the type III-B Cmr ribonucleoprotein (RNP) complex, an elongated RNP with Cmr2 and Cmr3 as the base, with Cmr4 and Cmr5 forming a helical core along the mature crRNA (39 or 45 nt in length), while the complex is capped by Cmr6 and Cmr1. The 5' end of the crRNA is bound to Cmr2 and Cmr3, while Cmr6 and a Cmr1 subunit (Cmr1-1 or Cmr1-2) cap the 3' end of the crRNA. The target RNA lies anti-parallel to the crRNA, with its 5' end near Cmr1 and Cmr6 and its 3' end near Cmr2 and Cmr3; major target RNA cleavage occurs nears the junction of Cmr1/Cmr6 and Cmr4/Cmr5, with minor cleavage occurring at 6 nt intervals which coincide with the proposed spacing of Cmr4 subunits. Interacts with Cmr5. Interacts with Cmr2, Cmr3, Cmr5 and Cmr6.

The protein resides in the cytoplasm. In terms of biological role, CRISPR (clustered regularly interspaced short palindromic repeat), is an adaptive immune system that provides protection against mobile genetic elements (viruses, transposable elements and conjugative plasmids). CRISPR clusters contain sequences complementary to antecedent mobile elements and target invading nucleic acids. CRISPR clusters are transcribed and processed into CRISPR RNA (crRNA), formerly called psiRNA (prokaryotic silencing) in this organism. Part of the Cmr ribonucleoprotein complex which has divalent cation-dependent endoribonuclease activity specific for ssRNA complementary to the crRNA (target RNA), generating 5' hydroxy- and 3' phosphate or 2'-3' cyclic phosphate termini. This is probably the subunit that cleaves the target RNA. Cmr complex does not cleave ssDNA complementary to the crRNA. Cleavage of target RNA is guided by the crRNA; substrate cleavage occurs a fixed distance (14 nt) from the 3' end of the crRNA. In vitro reconstitution shows Cmr1-2 and Cmr5 are not absolutely necessary for target cleavage. This Pyrococcus furiosus (strain ATCC 43587 / DSM 3638 / JCM 8422 / Vc1) protein is CRISPR system Cmr endoribonuclease Cmr4.